A 227-amino-acid polypeptide reads, in one-letter code: Octanoyltransferase (227 aa).

The region spanning 35-210 is the BPL/LPL catalytic domain; that stretch reads DKTPDEIWLV…TFLQLVGYSA (176 aa). Substrate is bound by residues 74 to 81, 141 to 143, and 154 to 156; these read RGGQVTYH, SLG, and GLA. The active-site Acyl-thioester intermediate is Cys-172.

The protein belongs to the LipB family.

It is found in the cytoplasm. The catalysed reaction is octanoyl-[ACP] + L-lysyl-[protein] = N(6)-octanoyl-L-lysyl-[protein] + holo-[ACP] + H(+). The protein operates within protein modification; protein lipoylation via endogenous pathway; protein N(6)-(lipoyl)lysine from octanoyl-[acyl-carrier-protein]: step 1/2. In terms of biological role, catalyzes the transfer of endogenously produced octanoic acid from octanoyl-acyl-carrier-protein onto the lipoyl domains of lipoate-dependent enzymes. Lipoyl-ACP can also act as a substrate although octanoyl-ACP is likely to be the physiological substrate. The sequence is that of Octanoyltransferase from Pectobacterium atrosepticum (strain SCRI 1043 / ATCC BAA-672) (Erwinia carotovora subsp. atroseptica).